The chain runs to 435 residues: GTPase Der (435 aa).

EngA-type G domains lie at 4-167 (PVVA…PEKD) and 175-350 (IRFS…DNHN). Residues 10-17 (GRPNVGKS), 57-61 (DTGGI), 119-122 (NKAD), 181-188 (GRPNVGKS), 228-232 (DTAGI), and 293-296 (NKWD) contribute to the GTP site. The KH-like domain occupies 351-435 (KRVQSATLND…PIHLIERARK (85 aa)).

The protein belongs to the TRAFAC class TrmE-Era-EngA-EngB-Septin-like GTPase superfamily. EngA (Der) GTPase family. Associates with the 50S ribosomal subunit.

Its function is as follows. GTPase that plays an essential role in the late steps of ribosome biogenesis. The chain is GTPase Der from Levilactobacillus brevis (strain ATCC 367 / BCRC 12310 / CIP 105137 / JCM 1170 / LMG 11437 / NCIMB 947 / NCTC 947) (Lactobacillus brevis).